A 98-amino-acid chain; its full sequence is MSVSIKPLEDRIVVRPLEAEQTTASGLVIPDTAKEKPQEGQVVAVGPGRVAENGNRVPVDVAEGDVVLYSKYGGTEVKVGGEEYLVLSARDVLAVVTK.

The protein belongs to the GroES chaperonin family. In terms of assembly, heptamer of 7 subunits arranged in a ring. Interacts with the chaperonin GroEL.

The protein localises to the cytoplasm. Functionally, together with the chaperonin GroEL, plays an essential role in assisting protein folding. The GroEL-GroES system forms a nano-cage that allows encapsulation of the non-native substrate proteins and provides a physical environment optimized to promote and accelerate protein folding. GroES binds to the apical surface of the GroEL ring, thereby capping the opening of the GroEL channel. This Micrococcus luteus (strain ATCC 4698 / DSM 20030 / JCM 1464 / CCM 169 / CCUG 5858 / IAM 1056 / NBRC 3333 / NCIMB 9278 / NCTC 2665 / VKM Ac-2230) (Micrococcus lysodeikticus) protein is Co-chaperonin GroES.